The primary structure comprises 431 residues: Fibrinogen C domain-containing protein 1 (431 aa).

Residues 1–3 (MLC) are Cytoplasmic-facing. Residues 4–24 (TVLLALAVLLAVAVTGAVLFL) traverse the membrane as a helical; Signal-anchor for type II membrane protein segment. Over 25–431 (NHTHTPGTAP…MKIRPVREDR (407 aa)) the chain is Extracellular. In terms of domain architecture, Fibrinogen C-terminal spans 205–428 (CATGSRPRDC…FSEMKIRPVR (224 aa)). Cys214 and Cys243 are disulfide-bonded. The N-linked (GlcNAc...) asparagine glycan is linked to Asn310. Ca(2+)-binding residues include Asp363 and Asp365. Cys371 and Cys384 form a disulfide bridge.

In terms of assembly, homotetramer; disulfide-linked.

The protein resides in the membrane. Its function is as follows. Acetyl group-binding receptor which shows a high-affinity and calcium-dependent binding to acetylated structures such as chitin, some N-acetylated carbohydrates, and amino acids, but not to their non-acetylated counterparts. Can facilitate the endocytosis of acetylated components. The sequence is that of Fibrinogen C domain-containing protein 1 (FIBCD1) from Macaca fascicularis (Crab-eating macaque).